Reading from the N-terminus, the 546-residue chain is 2-isopropylmalate synthase (546 aa).

The Pyruvate carboxyltransferase domain maps to 8 to 271 (ILIFDTTLRD…NSFFKRNPDS (264 aa)). Positions 17, 208, 210, and 244 each coordinate Mn(2+). Residues 408 to 546 (QLCLVQVSCG…NKTFLSNPAN (139 aa)) form a regulatory domain region.

Belongs to the alpha-IPM synthase/homocitrate synthase family. LeuA type 1 subfamily. In terms of assembly, homodimer. Requires Mn(2+) as cofactor.

Its subcellular location is the cytoplasm. It carries out the reaction 3-methyl-2-oxobutanoate + acetyl-CoA + H2O = (2S)-2-isopropylmalate + CoA + H(+). The protein operates within amino-acid biosynthesis; L-leucine biosynthesis; L-leucine from 3-methyl-2-oxobutanoate: step 1/4. In terms of biological role, catalyzes the condensation of the acetyl group of acetyl-CoA with 3-methyl-2-oxobutanoate (2-ketoisovalerate) to form 3-carboxy-3-hydroxy-4-methylpentanoate (2-isopropylmalate). The polypeptide is 2-isopropylmalate synthase (Prochlorococcus marinus (strain MIT 9312)).